The sequence spans 206 residues: Flavin reductase (NADPH) (206 aa).

The NADP(+) site is built by G10, T12, G13, N14, T15, R35, S38, and R39. S42 carries the phosphoserine modification. 5 residues coordinate NADP(+): D54, V55, L75, G76, and R78. At S82 the chain carries Phosphoserine. 5 residues coordinate NADP(+): M87, C109, H132, H153, and I154. C109 (S-nitroso-cysteine intermediate; for S-nitroso-CoA-dependent nitrosyltransferase activity) is an active-site residue. C188 serves as the catalytic S-nitroso-cysteine intermediate; for S-nitroso-CoA-dependent nitrosyltransferase activity.

In terms of assembly, monomer. As to expression, at least expressed in the liver and erythrocyte.

It localises to the cytoplasm. The enzyme catalyses reduced riboflavin + NADP(+) = riboflavin + NADPH + 2 H(+). It catalyses the reaction bilirubin IXbeta + NADP(+) = biliverdin IXbeta + NADPH + H(+). It carries out the reaction FMNH2 + NAD(+) = FMN + NADH + 2 H(+). The catalysed reaction is FMNH2 + NADP(+) = FMN + NADPH + 2 H(+). The enzyme catalyses S-nitroso-CoA + L-cysteinyl-[protein] = S-nitroso-L-cysteinyl-[protein] + CoA. It catalyses the reaction L-cysteinyl-[SCAN] + S-nitroso-CoA = S-nitroso-L-cysteinyl-[SCAN] + CoA. It carries out the reaction S-nitroso-L-cysteinyl-[SCAN] + L-cysteinyl-[protein] = L-cysteinyl-[SCAN] + S-nitroso-L-cysteinyl-[protein]. Functionally, enzyme that can both act as a NAD(P)H-dependent reductase and a S-nitroso-CoA-dependent nitrosyltransferase. Promotes fetal heme degradation during development. Also expressed in adult tissues, where it acts as a regulator of hematopoiesis, intermediary metabolism (glutaminolysis, glycolysis, TCA cycle and pentose phosphate pathway) and insulin signaling. Has a broad specificity oxidoreductase activity by catalyzing the NAD(P)H-dependent reduction of a variety of flavins, such as riboflavin, FAD or FMN, biliverdins, methemoglobin and PQQ (pyrroloquinoline quinone). Contributes to fetal heme catabolism by catalyzing reduction of biliverdin IXbeta into bilirubin IXbeta in the liver. Biliverdin IXbeta, which constitutes the major heme catabolite in the fetus is not present in adult. Does not reduce bilirubin IXalpha. Can also reduce the complexed Fe(3+) iron to Fe(2+) in the presence of FMN and NADPH. Acts as a protein nitrosyltransferase by catalyzing nitrosylation of cysteine residues of target proteins, such as HMOX2, INSR and IRS1. S-nitroso-CoA-dependent nitrosyltransferase activity is mediated via a 'ping-pong' mechanism: BLVRB first associates with both S-nitroso-CoA and protein substrate, nitric oxide group is then transferred from S-nitroso-CoA to Cys-109 and Cys-188 residues of BLVRB and from S-nitroso-BLVRB to the protein substrate. Inhibits insulin signaling by mediating nitrosylation of INSR and IRS1, leading to their inhibition. The polypeptide is Flavin reductase (NADPH) (BLVRB) (Bos taurus (Bovine)).